A 262-amino-acid chain; its full sequence is MASQWTIPKLVTWRVRDWASCFLACKIPLDGDEDGANNNGNTTNNNNLTFKRIKRKIKSTKKKRSERKLSLSPPGTRHHHLHLRSSSVSPTTSGSQHRRLSWPQPPVSEESGFIVFCFDREDGGFDVVKEGKQEKKETESSSEKSPRTVNRKLIYGDQGVGGTEKNNSPETKGTEQDQNDNTSCQGTKDVSSDVTERTKEEEDIDASDKSSGSSHSDEGRGSFAFPILGVEWMGSPAKMPESDDLSPKKQKPVALGFQCCRF.

2 disordered regions span residues 32 to 107 (DEDG…QPPV) and 129 to 222 (KEGK…GRGS). Residues 37–47 (NNNGNTTNNNN) show a composition bias toward low complexity. 2 short sequence motifs (nuclear localization signal) span residues 50 to 57 (FKRIKRKI) and 61 to 68 (KKKRSERK). A compositionally biased stretch (basic residues) spans 51–66 (KRIKRKIKSTKKKRSE). A phosphoserine; by ASK7 mark is found at Ser72, Ser85, Ser86, and Ser87. The span at 84–95 (RSSSVSPTTSGS) shows a compositional bias: low complexity. Ser89 is subject to Phosphoserine; by ASK7 and MPK6. Thr91 bears the Phosphothreonine; by ASK7 mark. A compositionally biased stretch (basic and acidic residues) spans 129 to 146 (KEGKQEKKETESSSEKSP). A phosphoserine; by MPK6 mark is found at Ser145 and Ser168. Polar residues predominate over residues 179–189 (NDNTSCQGTKD). Residues 190-200 (VSSDVTERTKE) are compositionally biased toward basic and acidic residues. The interval 222-262 (SFAFPILGVEWMGSPAKMPESDDLSPKKQKPVALGFQCCRF) is required for polarization at the cell cortex. Residues 223 to 226 (FAFP) carry the FxFP, required for cortical polarity formation motif. A phosphoserine; by MPK6 mark is found at Ser235 and Ser246.

Component of a complex made of POLAR, BASL, ASK7/BIN2 and ASK3/SK12. Interacts with POLAR, ASK7/BIN2 and ASK3/SK12. Binds to YDA when phosphorylated. Interacts with MPK6, MPK3 and MKK5. In terms of processing, cortical localization of BASL requires phosphorylation mediated by MPK3 and MPK6. Phosphorylation promotes YDA binding. Phosphorylation status modulates subcellular mobility. As to expression, mostly expressed in stomatal lineage cells including asymmetrically dividing meristemoid mother cells (MMCs) and meristemoids, and, at lower levels, in their sisters. Also present in vasculature. Expressed at low levels in the epidermal pavement cells.

Its subcellular location is the cytoplasm. The protein resides in the nucleus. The protein localises to the cell cortex. It localises to the cell membrane. Functionally, regulates asymmetric cell division (ACD), especially in stomatal-lineage cells, probably by modulating accumulation and subcellular polarization of POLAR and SPCH. Mediates an attenuation of MAPK signaling upon polarization of POLAR and ASK7/BIN2 in stomatal lineage ground cells (SLGCs) undergoing ACD, and relieves BIN2 inhibition of SPCH in the nucleus. When phosphorylated, functions as a scaffold and recruits the MAPKKK YODA, MPK3 and MPK6 to spatially reorganize the MAPK signaling pathway at the cortex of cells undergoing ACD. Cortical polarization leads to elevated nuclear MPK6 signaling and lowered SPCH abundance in one of the two daughter cells, thus differentiating the two daughter cells after ACD. The sequence is that of Protein BREAKING OF ASYMMETRY IN THE STOMATAL LINEAGE from Arabidopsis thaliana (Mouse-ear cress).